Here is a 153-residue protein sequence, read N- to C-terminus: Putative tRNA (cytidine(34)-2'-O)-methyltransferase (153 aa).

Positions 102, 122, and 131 each coordinate S-adenosyl-L-methionine.

It belongs to the class IV-like SAM-binding methyltransferase superfamily. RNA methyltransferase TrmH family. TrmL subfamily.

The protein localises to the cytoplasm. The catalysed reaction is cytidine(34) in tRNA + S-adenosyl-L-methionine = 2'-O-methylcytidine(34) in tRNA + S-adenosyl-L-homocysteine + H(+). It carries out the reaction 5-carboxymethylaminomethyluridine(34) in tRNA(Leu) + S-adenosyl-L-methionine = 5-carboxymethylaminomethyl-2'-O-methyluridine(34) in tRNA(Leu) + S-adenosyl-L-homocysteine + H(+). In terms of biological role, could methylate the ribose at the nucleotide 34 wobble position in tRNA. The polypeptide is Putative tRNA (cytidine(34)-2'-O)-methyltransferase (Synechocystis sp. (strain ATCC 27184 / PCC 6803 / Kazusa)).